The chain runs to 2364 residues: MNLVNKAQLQKMVYVKFRIQEDEYVAILNALEEYHNMSESSVVEKYLKLKDINNLTDNYLNTYKKSGRNKALKKFKEYLTMEVLELKNNSLTPVEKNLHFIWIGGQINDTAINYINQWKDVNSDYTVKVFYDSNAFLINTLKKTIVESATNNTLESFRENLNDPEFDYNKFYRKRMEIIYDKQKHFIDYYKSQIEENPEFIIDNIIKTYLSNEYSKDLEALNKYIEESLNKITANNGNDIRNLEKFADEDLVRLYNQELVERWNLAAASDILRISMLKEDGGVYLDVDILPGIQPDLFKSINKPDSITNTSWEMIKLEAIMKYKEYIPGYTSKNFDMLDEEVQRSFESALSSKSDKSEIFLPLDDIKVSPLEVKIAFANNSVINQALISLKDSYCSDLVINQIKNRYKILNDNLNPSINEGTDFNTTMKIFSDKLASISNEDNMMFMIKITNYLKVGFAPDVRSTINLSGPGVYTGAYQDLLMFKDNSTNIHLLEPELRNFEFPKTKISQLTEQEITSLWSFNQARAKSQFEEYKKGYFEGALGEDDNLDFAQNTVLDKDYVSKKILSSMKTRNKEYIHYIVQLQGDKISYEASCNLFSKDPYSSILYQKNIEGSETAYYYYVADAEIKEIDKYRIPYQISNKRNIKLTFIGHGKSEFNTDTFANLDVDSLSSEIETILNLAKADISPKYIEINLLGCNMFSYSISAEETYPGKLLLKIKDRVSELMPSISQDSITVSANQYEVRINEEGKREILDHSGKWINKEESIIKDISSKEYISFNPKENKIIVKSKYLHELSTLLQEIRNNANSSDIDLEKKVMLTECEINVASNIDRQIVEGRIEEAKNLTSDSINYIKNEFKLIESISDSLYDLKHQNGLDDSHFISFEDISKTENGFRIRFINKETGNSIFIETEKEIFSEYATHISKEISNIKDTIFDNVNGKLVKKVNLDAAHEVNTLNSAFFIQSLIEYNTTKESLSNLSVAMKVQVYAQLFSTGLNTITDASKVVELVSTALDETIDLLPTLSEGLPIIATIIDGVSLGAAIKELSETNDPLLRQEIEAKIGIMAVNLTAASTAIVTSALGIASGFSILLVPLAGISAGIPSLVNNELILQDKATKVIDYFKHISLAETEGAFTLLDDKIIMPQDDLVLSEIDFNNNSITLGKCEIWRAEGGSGHTLTDDIDHFFSSPSITYRKPWLSIYDVLNIKKEKIDFSKDLMVLPNAPNRVFGYEMGWTPGFRSLDNDGTKLLDRIRDHYEGQFYWRYFAFIADALITKLKPRYEDTNVRINLDGNTRSFIVPVITTEQIRKNLSYSFYGSGGSYSLSLSPYNMNIDLNLVENDTWVIDVDNVVKNITIESDEIQKGELIENILSKLNIEDNKIILNNHTINFYGDINESNRFISLTFSILEDINIIIEIDLVSKSYKILLSGNCMKLIENSSDIQQKIDHIGFNGEHQKYIPYSYIDNETKYNGFIDYSKKEGLFTAEFSNESIIRNIYMPDSNNLFIYSSKDLKDIRIINKGDVKLLIGNYFKDDMKVSLSFTIEDTNTIKLNGVYLDENGVAQILKFMNNAKSALNTSNSLMNFLESINIKNIFYNNLDPNIEFILDTNFIISGSNSIGQFELICDKDKNIQPYFINFKIKETSYTLYVGNRQNLIVEPSYHLDDSGNISSTVINFSQKYLYGIDRYVNKVIIAPNLYTDEINITPVYKPNYICPEVIILDANYINEKINVNINDLSIRYVWDNDGSDLILIANSEEDNQPQVKIRFVNVFKSDTAADKLSFNFSDKQDVSVSKIISTFSLAAYSDGFFDYEFGLVSLDNDYFYINSFGNMVSGLIYINDSLYYFKPPKNNLITGFTTIDGNKYYFDPTKSGAASIGEITIDGKDYYFNKQGILQVGVINTSDGLKYFAPAGTLDENLEGESVNFIGKLNIDGKIYYFEDNYRAAVEWKLLDDETYYFNPKTGEALKGLHQIGDNKYYFDDNGIMQTGFITINDKVFYFNNDGVMQVGYIEVNGKYFYFGKNGERQLGVFNTPDGFKFFGPKDDDLGTEEGELTLYNGILNFNGKIYFFDISNTAVVGWGTLDDGSTYYFDDNRAEACIGLTVINDCKYYFDDNGIRQLGFITINDNIFYFSESGKIELGYQNINGNYFYIDESGLVLIGVFDTPDGYKYFAPLNTVNDNIYGQAVKYSGLVRVNEDVYYFGETYKIETGWIENETDKYYFDPETKKAYKGINVVDDIKYYFDENGIMRTGLISFENNNYYFNEDGKMQFGYLNIKDKMFYFGKDGKMQIGVFNTPDGFKYFAHQNTLDENFEGESINYTGWLDLDGKRYYFTDEYIAATGSLTIDGYNYYFDPDTAELVVSE.

The four-helical bundle stretch occupies residues 1 to 91 (MNLVNKAQLQ…EVLELKNNSL (91 aa)). The GT44 domain maps to 96–468 (KNLHFIWIGG…APDVRSTINL (373 aa)). Positions 96-468 (KNLHFIWIGG…APDVRSTINL (373 aa)) are glucosyltransferase region. Residues 101–103 (IWI), Asn139, 265–270 (LAAASD), and 286–288 (DVD) contribute to the UDP-alpha-D-glucose site. Residues Asp288, Glu515, and Ser518 each contribute to the Mg(2+) site. Residue 518-520 (SLW) coordinates UDP-alpha-D-glucose. The interval 544–799 (GEDDNLDFAQ…KSKYLHELST (256 aa)) is autoprocessing region. Zn(2+)-binding residues include Glu545 and Asp546. The region spanning 567–774 (LSSMKTRNKE…EESIIKDISS (208 aa)) is the Peptidase C80 domain. The 1D-myo-inositol hexakisphosphate site is built by Tyr577, Lys600, and Lys647. Position 653 (His653) interacts with Zn(2+). His653 (for protease activity) is an active-site residue. Catalysis depends on Cys698, which acts as the Nucleophile; for protease activity. Residue His757 participates in Zn(2+) binding. 1D-myo-inositol hexakisphosphate contacts are provided by Lys764, Lys775, and Lys792. Residues 800–1500 (LLQEIRNNAN…ESIIRNIYMP (701 aa)) are translocation region. Interaction with host SEMA6A and SEMA6B stretches follow at residues 1433–1438 (CMKLIE), 1466–1471 (DNETKY), 1484–1495 (FTAEFSNESIIR), 1504–1511 (NLFIYSSK), and 1596–1601 (YNNLDP). Cell wall-binding repeat units lie at residues 1813–1832 (EFGLVSLDNDYFYINSFGNM), 1833–1852 (VSGLIYINDSLYYFKPPKNN), 1854–1873 (ITGFTTIDGNKYYFDPTKSG), 1876–1895 (SIGEITIDGKDYYFNKQGIL), 1926–1945 (FIGKLNIDGKIYYFEDNYRA), 1946–1965 (AVEWKLLDDETYYFNPKTGE), 1967–1986 (LKGLHQIGDNKYYFDDNGIM), 1987–2006 (QTGFITINDKVFYFNNDGVM), 2007–2026 (QVGYIEVNGKYFYFGKNGER), 2057–2076 (YNGILNFNGKIYFFDISNTA), 2077–2097 (VVGWGTLDDGSTYYFDDNRAE), 2099–2118 (CIGLTVINDCKYYFDDNGIR), 2119–2138 (QLGFITINDNIFYFSESGKI), 2139–2158 (ELGYQNINGNYFYIDESGLV), 2209–2224 (ETGWIENETDKYYFDP), 2227–2249 (KKAYKGINVVDDIKYYFDENGIM), 2250–2269 (RTGLISFENNNYYFNEDGKM), 2270–2289 (QFGYLNIKDKMFYFGKDGKM), 2320–2339 (YTGWLDLDGKRYYFTDEYIA), and 2340–2359 (ATGSLTIDGYNYYFDPDTAE). Positions 1835–2364 (GLIYINDSLY…PDTAELVVSE (530 aa)) are receptor-binding (CROPS) region.

This sequence belongs to the clostridial glucosylating toxin (LCGT) family. Homomultimer; forms an inactive homomultimer at pH 8, which dissociates at pH 4, leading to cytotoxicity. Interacts with host SEMA6A; interaction promotes toxin entry into host cell. Interacts with host SEMA6B; interaction promotes toxin entry into host cell. Zn(2+) is required as a cofactor. Requires Mn(2+) as cofactor. It depends on Mg(2+) as a cofactor. Undergoes autocatalytic cleavage to release the N-terminal part (Glucosyltransferase TcsL), which constitutes the active part of the toxin, in the host cytosol. 1D-myo-inositol hexakisphosphate-binding (InsP6) activates the peptidase C80 domain and promotes autoprocessing.

It is found in the secreted. The protein localises to the host endosome membrane. Its subcellular location is the host cytoplasm. It localises to the host cytosol. The protein resides in the host cell membrane. The catalysed reaction is L-threonyl-[protein] + UDP-alpha-D-glucose = 3-O-(alpha-D-glucosyl)-L-threonyl-[protein] + UDP + H(+). With respect to regulation, protease activity is activated upon binding to 1D-myo-inositol hexakisphosphate (InsP6), which induces conformational reorganization. In terms of biological role, precursor of a cytotoxin that targets the vascular endothelium, inducing an anti-inflammatory effect and resulting in lethal toxic shock syndrome. TcsL constitutes the main toxin that mediates the pathology of P.sordellii infection, an anaerobic Gram-positive bacterium found in soil and in the gastrointestinal and vaginal tracts of animals and humans; although the majority of carriers are asymptomatic, pathogenic P.sordellii infections arise rapidly and are highly lethal. This form constitutes the precursor of the toxin: it enters into host cells and mediates autoprocessing to release the active toxin (Glucosyltransferase TcsL) into the host cytosol. Targets vascular endothelium by binding to the semaphorin proteins SEMA6A and SEMA6B, and enters host cells via clathrin-mediated endocytosis. Once entered into host cells, acidification in the endosome promotes the membrane insertion of the translocation region and formation of a pore, leading to translocation of the GT44 and peptidase C80 domains across the endosomal membrane. This activates the peptidase C80 domain and autocatalytic processing, releasing the N-terminal part (Glucosyltransferase TcsL), which constitutes the active part of the toxin, in the cytosol. Active form of the toxin, which is released into the host cytosol following autoprocessing and inactivates small GTPases. Acts by mediating monoglucosylation of small GTPases of the Ras (H-Ras/HRAS, K-Ras/KRAS, N-Ras/NRAS and Ral/RALA) family in host cells at the conserved threonine residue located in the switch I region ('Thr-37/35'), using UDP-alpha-D-glucose as the sugar donor. Also able to catalyze monoglucosylation of some members of the Rho family (Rac1 and Rap2A), but with less efficiency than with Ras proteins. Monoglucosylation of host small GTPases completely prevents the recognition of the downstream effector, blocking the GTPases in their inactive form and leading to apoptosis. Induces an anti-inflammatory effect, mainly by inactivating Ras proteins which results in blockage of the cell cycle and killing of immune cells. The absence or moderate local inflammatory response allows C.sordellii spreading in deep tissues, production of toxin which is released in the general circulation and causes a toxic shock syndrome. This chain is Cytotoxin-L, found in Paraclostridium sordellii (Clostridium sordellii).